A 440-amino-acid chain; its full sequence is Dynein axonemal assembly factor 11 (440 aa).

4 LRR repeats span residues 20–43, 44–65, 66–89, and 90–110; these read IFSL…HKWC, RDLK…VGRL, KKLE…GCES, and LQKL…ETLK. Residues 128–146 enclose the LRRCT domain; sequence YQGYRQYVVATVPQLQSLD. Basic and acidic residues predominate over residues 178–192; the sequence is EEREKQKSNANEHPE. Disordered stretches follow at residues 178-267 and 363-440; these read EERE…RTLI and PKKR…PPLM. The span at 193–211 shows a compositional bias: polar residues; the sequence is INQSLSESQNGTQQYPESS. A compositionally biased stretch (basic and acidic residues) spans 236–259; it reads SRLEAHRHLEEKRRANEKEKEKPK. In terms of domain architecture, CS spans 276-374; sequence VNEPKLDFSL…KRTIRPTSVT (99 aa). Residues 369-378 are compositionally biased toward polar residues; that stretch reads RPTSVTSNQN. Composition is skewed to basic and acidic residues over residues 379-392 and 420-431; these read NKKD…RELL and GLEERPVSKDFV.

It belongs to the tilB family. Interacts with dvl2. Interacts with kur. As to expression, expressed in kinocilia of hair cells.

Its subcellular location is the cytoplasm. The protein localises to the dynein axonemal particle. The protein resides in the cell projection. It localises to the cilium. Plays a crucial role in regulating cilia motility in pronephric tubules, cloaca and neural tube. Required for establishing left-right asymmetry of the body plan; controls cell fate and convergent extension (CE) movements during gastrulation, respectively, via the Wnt and the planar cell polarity (PCP) signaling pathways. Required for the proper development of renal glomeruli and tubules. The protein is Dynein axonemal assembly factor 11 (dnaaf11) of Danio rerio (Zebrafish).